The chain runs to 70 residues: DNA gyrase inhibitor YacG (70 aa).

Cys-7, Cys-10, Cys-26, and Cys-30 together coordinate Zn(2+).

This sequence belongs to the DNA gyrase inhibitor YacG family. In terms of assembly, interacts with GyrB. Zn(2+) serves as cofactor.

Its function is as follows. Inhibits all the catalytic activities of DNA gyrase by preventing its interaction with DNA. Acts by binding directly to the C-terminal domain of GyrB, which probably disrupts DNA binding by the gyrase. This Shewanella sediminis (strain HAW-EB3) protein is DNA gyrase inhibitor YacG.